The chain runs to 75 residues: Small ribosomal subunit protein bS18 (75 aa).

This sequence belongs to the bacterial ribosomal protein bS18 family. Part of the 30S ribosomal subunit. Forms a tight heterodimer with protein bS6.

Its function is as follows. Binds as a heterodimer with protein bS6 to the central domain of the 16S rRNA, where it helps stabilize the platform of the 30S subunit. This Thermotoga sp. (strain RQ2) protein is Small ribosomal subunit protein bS18.